We begin with the raw amino-acid sequence, 985 residues long: Probable beta-galactosidase C (985 aa).

The signal sequence occupies residues 1–23; that stretch reads MRILSLLFLLLLGFLAGNRVVSA. 5 residues coordinate substrate: Tyr-82, Asn-127, Ala-128, Glu-129, and Asn-187. The active-site Proton donor is the Glu-188. Residue Tyr-251 participates in substrate binding. A disulfide bridge links Cys-257 with Cys-304. The N-linked (GlcNAc...) asparagine glycan is linked to Asn-276. The active-site Nucleophile is the Glu-287. Tyr-353 serves as a coordination point for substrate. 8 N-linked (GlcNAc...) asparagine glycosylation sites follow: Asn-391, Asn-434, Asn-517, Asn-602, Asn-677, Asn-715, Asn-720, and Asn-759.

It belongs to the glycosyl hydrolase 35 family.

The protein localises to the secreted. The enzyme catalyses Hydrolysis of terminal non-reducing beta-D-galactose residues in beta-D-galactosides.. Functionally, cleaves beta-linked terminal galactosyl residues from gangliosides, glycoproteins, and glycosaminoglycans. The polypeptide is Probable beta-galactosidase C (lacC) (Aspergillus clavatus (strain ATCC 1007 / CBS 513.65 / DSM 816 / NCTC 3887 / NRRL 1 / QM 1276 / 107)).